Here is an 850-residue protein sequence, read N- to C-terminus: Pierisin (850 aa).

Ricin B-type lectin domains are found at residues 267–409 (GEFM…WNII), 413–560 (FRPI…WDIK), and 564–707 (YQYV…WYLK).

This sequence belongs to the pierisin ADP-ribosyltransferase family.

The catalysed reaction is a 2'-deoxyguanosine in DNA + NAD(+) = an N(2)-(ADP-L-ribosyl)-2'-deoxyguanosine in DNA + nicotinamide + H(+). Its function is as follows. ADP-ribosylates double-stranded DNA by targeting the N2 amino group of dG residues. Induces apoptosis in a range of human cell lines. May play a role in destroying cells during pupation and/or defense against parasites. This chain is Pierisin, found in Pieris brassicae (White butterfly).